The following is a 146-amino-acid chain: Prefoldin subunit alpha (146 aa).

This sequence belongs to the prefoldin alpha subunit family. Heterohexamer of two alpha and four beta subunits.

It is found in the cytoplasm. Molecular chaperone capable of stabilizing a range of proteins. Seems to fulfill an ATP-independent, HSP70-like function in archaeal de novo protein folding. The chain is Prefoldin subunit alpha from Methanobrevibacter smithii (strain ATCC 35061 / DSM 861 / OCM 144 / PS).